Here is a 513-residue protein sequence, read N- to C-terminus: GMP synthase [glutamine-hydrolyzing] (513 aa).

The Glutamine amidotransferase type-1 domain maps to 8–198 (MILVLDFGSQ…VFGVCDCDGK (191 aa)). C85 (nucleophile) is an active-site residue. Active-site residues include H172 and E174. In terms of domain architecture, GMPS ATP-PPase spans 199–388 (WSMENFIEIE…LGIPDDIVWR (190 aa)). 226–232 (SGGVDSS) contacts ATP.

Homodimer.

The enzyme catalyses XMP + L-glutamine + ATP + H2O = GMP + L-glutamate + AMP + diphosphate + 2 H(+). It functions in the pathway purine metabolism; GMP biosynthesis; GMP from XMP (L-Gln route): step 1/1. Its function is as follows. Catalyzes the synthesis of GMP from XMP. The sequence is that of GMP synthase [glutamine-hydrolyzing] from Bacillus pumilus (strain SAFR-032).